Consider the following 251-residue polypeptide: Zinc import ATP-binding protein ZnuC (251 aa).

The 216-residue stretch at 5-220 (VSLENVSVSF…PEFISMFGPR (216 aa)) folds into the ABC transporter domain. 37–44 (GPNGAGKS) is an ATP binding site.

This sequence belongs to the ABC transporter superfamily. Zinc importer (TC 3.A.1.15.5) family. As to quaternary structure, the complex is composed of two ATP-binding proteins (ZnuC), two transmembrane proteins (ZnuB) and a solute-binding protein (ZnuA).

It is found in the cell inner membrane. It catalyses the reaction Zn(2+)(out) + ATP(in) + H2O(in) = Zn(2+)(in) + ADP(in) + phosphate(in) + H(+)(in). Part of the ABC transporter complex ZnuABC involved in zinc import. Responsible for energy coupling to the transport system. The chain is Zinc import ATP-binding protein ZnuC from Shigella flexneri serotype 5b (strain 8401).